Reading from the N-terminus, the 163-residue chain is SKP1-like protein 3 (163 aa).

The interval 105–163 (LRAANYLNISGLLDLTCKAVADQMRGKTPAQMREHFNIKNDYTPEEEAEVRNENRWAFE) is interaction with the F-box domain of F-box proteins.

It belongs to the SKP1 family. As to quaternary structure, part of a SCF (SKP1-cullin-F-box) protein ligase complex. Interacts with ADO3/FKF1 and At3g61590. As to expression, highly expressed in siliques.

Its subcellular location is the nucleus. It functions in the pathway protein modification; protein ubiquitination. In terms of biological role, involved in ubiquitination and subsequent proteasomal degradation of target proteins. Together with CUL1, RBX1 and a F-box protein, it forms a SCF E3 ubiquitin ligase complex. The functional specificity of this complex depends on the type of F-box protein. In the SCF complex, it serves as an adapter that links the F-box protein to CUL1. The sequence is that of SKP1-like protein 3 (ASK3) from Arabidopsis thaliana (Mouse-ear cress).